The chain runs to 124 residues: Photoactive yellow protein (124 aa).

One can recognise a PAS domain in the interval 22–85 (AESLPFGAVL…GEFLKFNRTG (64 aa)). Cysteine 68 carries the post-translational modification S-(4-hydroxycinnamyl)cysteine.

The protein belongs to the photoactive yellow protein family. Post-translationally, the 4-hydroxycinnamic acid (p-coumaric acid) chromophore is covalently bound via a thioester linkage.

Its function is as follows. This photoactive protein is a photoreceptor with kinetics similar to that of rhodopsin. The protein is Photoactive yellow protein (pyp) of Rhodobacter capsulatus (strain ATCC BAA-309 / NBRC 16581 / SB1003).